The chain runs to 326 residues: Vacuolar protein sorting-associated protein 26A-B (326 aa).

Belongs to the VPS26 family. Component of the heterotrimeric retromer cargo-selective complex (CSC) which is believed to associate with variable sorting nexins to form functionally distinct retromer complex variants.

The protein localises to the cytoplasm. The protein resides in the endosome membrane. It is found in the early endosome. Acts as a component of the retromer cargo-selective complex (CSC). The CSC is believed to be the core functional component of retromer or respective retromer complex variants acting to prevent missorting of selected transmembrane cargo proteins into the lysosomal degradation pathway. Retromer mediates retrograde transport of cargo proteins from endosomes to the trans-Golgi network (TGN). The polypeptide is Vacuolar protein sorting-associated protein 26A-B (vps26a-b) (Xenopus laevis (African clawed frog)).